Consider the following 380-residue polypeptide: Genome polyprotein (380 aa).

Disordered regions lie at residues 54–154 (GTVD…TGKI) and 349–380 (GNVGETQENTERHTAGDVSRNMHSLLGVQQHH). Low complexity predominate over residues 67–84 (QGTTPPATGSGAKPATSG). Composition is skewed to gly residues over residues 85 to 99 (AGSGSGTGAGTGVTG) and 106 to 123 (SGTGTGSGATGGQSGSGS). Positions 129–140 (NTGSAGTNATGG) are enriched in low complexity.

It belongs to the potyviridae genome polyprotein family. In terms of processing, genome polyprotein of potyviruses undergoes post-translational proteolytic processing by the main proteinase NIa-pro resulting in the production of at least ten individual proteins. The P1 proteinase and the HC-pro cleave only their respective C-termini autocatalytically. 6K1 is essential for proper proteolytic separation of P3 from CI.

Its subcellular location is the virion. The catalysed reaction is RNA(n) + a ribonucleoside 5'-triphosphate = RNA(n+1) + diphosphate. In terms of biological role, an RNA-dependent RNA polymerase that plays an essential role in the virus replication. Its function is as follows. Involved in aphid transmission, cell-to-cell and systemis movement, encapsidation of the viral RNA and in the regulation of viral RNA amplification. This chain is Genome polyprotein, found in Sorghum halepense (Johnson grass).